Reading from the N-terminus, the 91-residue chain is DNA-binding protein HU (91 aa).

Belongs to the bacterial histone-like protein family. Homodimer.

Its function is as follows. Histone-like DNA-binding protein which is capable of wrapping DNA to stabilize it, and thus to prevent its denaturation under extreme environmental conditions. The sequence is that of DNA-binding protein HU (hup) from Lactococcus lactis subsp. lactis (strain IL1403) (Streptococcus lactis).